The sequence spans 129 residues: Prefoldin subunit 6 (129 aa).

An N-acetylalanine modification is found at alanine 2. Residue lysine 21 is modified to N6-acetyllysine. Residue lysine 66 is modified to N6-acetyllysine; alternate. A Glycyl lysine isopeptide (Lys-Gly) (interchain with G-Cter in SUMO1); alternate cross-link involves residue lysine 66. Residue lysine 66 forms a Glycyl lysine isopeptide (Lys-Gly) (interchain with G-Cter in SUMO2); alternate linkage.

Belongs to the prefoldin subunit beta family. As to quaternary structure, heterohexamer of two PFD-alpha type and four PFD-beta type subunits. Component of the PAQosome complex which is responsible for the biogenesis of several protein complexes and which consists of R2TP complex members RUVBL1, RUVBL2, RPAP3 and PIH1D1, URI complex members PFDN2, PFDN6, PDRG1, UXT and URI1 as well as ASDURF, POLR2E and DNAAF10/WDR92.

Its function is as follows. Binds specifically to cytosolic chaperonin (c-CPN) and transfers target proteins to it. Binds to nascent polypeptide chain and promotes folding in an environment in which there are many competing pathways for nonnative proteins. This Bos taurus (Bovine) protein is Prefoldin subunit 6 (PFDN6).